A 148-amino-acid polypeptide reads, in one-letter code: Large ribosomal subunit protein uL15 (148 aa).

Positions Met-1–Gly-30 are enriched in basic residues. Residues Met-1 to Leu-38 form a disordered region. Residue His-39 is modified to (3S)-3-hydroxyhistidine. N6-acetyllysine is present on residues Lys-47 and Lys-55. Ser-68 carries the post-translational modification Phosphoserine. Lys-110 carries the post-translational modification N6-acetyllysine.

The protein belongs to the universal ribosomal protein uL15 family. Component of the large ribosomal subunit. Post-translationally, hydroxylated on His-39 by MINA.

Its subcellular location is the cytoplasm. Component of the large ribosomal subunit. The ribosome is a large ribonucleoprotein complex responsible for the synthesis of proteins in the cell. In Homo sapiens (Human), this protein is Large ribosomal subunit protein uL15 (RPL27A).